We begin with the raw amino-acid sequence, 318 residues long: Pantothenate kinase (318 aa).

An ATP-binding site is contributed by 96–103; that stretch reads GSVAVGKS.

This sequence belongs to the prokaryotic pantothenate kinase family.

The protein resides in the cytoplasm. It carries out the reaction (R)-pantothenate + ATP = (R)-4'-phosphopantothenate + ADP + H(+). Its pathway is cofactor biosynthesis; coenzyme A biosynthesis; CoA from (R)-pantothenate: step 1/5. This Nitrobacter hamburgensis (strain DSM 10229 / NCIMB 13809 / X14) protein is Pantothenate kinase.